The primary structure comprises 263 residues: Glutamate/glutamine/aspartate/asparagine transport ATP-binding protein BztD (263 aa).

The ABC transporter domain occupies 23 to 257 (IQISQMNKWY…PQSERTKQFL (235 aa)). Position 55-62 (55-62 (GPSGSGKS)) interacts with ATP.

The protein belongs to the ABC transporter superfamily. BztB and BztC form a heterodimer which can form a membrane complex with a homodimer of BztD.

The protein localises to the cell membrane. In terms of biological role, part of a binding-protein-dependent transport system for glutamate, glutamine, aspartate, asparagine. Probably responsible for energy coupling to the transport system. The chain is Glutamate/glutamine/aspartate/asparagine transport ATP-binding protein BztD (bztD) from Rhodobacter capsulatus (strain ATCC BAA-309 / NBRC 16581 / SB1003).